The following is a 278-amino-acid chain: Hydroxyethylthiazole kinase (278 aa).

Position 48 (methionine 48) interacts with substrate. Positions 124 and 175 each coordinate ATP. Glycine 202 lines the substrate pocket.

It belongs to the Thz kinase family. It depends on Mg(2+) as a cofactor.

It catalyses the reaction 5-(2-hydroxyethyl)-4-methylthiazole + ATP = 4-methyl-5-(2-phosphooxyethyl)-thiazole + ADP + H(+). The protein operates within cofactor biosynthesis; thiamine diphosphate biosynthesis; 4-methyl-5-(2-phosphoethyl)-thiazole from 5-(2-hydroxyethyl)-4-methylthiazole: step 1/1. Functionally, catalyzes the phosphorylation of the hydroxyl group of 4-methyl-5-beta-hydroxyethylthiazole (THZ). This chain is Hydroxyethylthiazole kinase, found in Clostridium botulinum (strain Eklund 17B / Type B).